A 213-amino-acid polypeptide reads, in one-letter code: Adenylate kinase (213 aa).

10 to 15 (GAGKGT) is a binding site for ATP. Residues 30–59 (STGDMFRAAMANQTEMGLLAKSYIDKGDLV) are NMP. AMP is bound by residues T31, R36, 57-59 (DLV), 86-89 (GYPR), and Q93. Residues 127–160 (GRIIHKKTGETFHKIFNPPAGDYDENDYYQREDD) are LID. Residues R128 and 137-138 (TF) each bind ATP. The AMP site is built by R157 and R168. Residue Q196 coordinates ATP.

It belongs to the adenylate kinase family. Monomer.

The protein resides in the cytoplasm. It carries out the reaction AMP + ATP = 2 ADP. The protein operates within purine metabolism; AMP biosynthesis via salvage pathway; AMP from ADP: step 1/1. Catalyzes the reversible transfer of the terminal phosphate group between ATP and AMP. Plays an important role in cellular energy homeostasis and in adenine nucleotide metabolism. In Streptococcus uberis (strain ATCC BAA-854 / 0140J), this protein is Adenylate kinase.